Consider the following 472-residue polypeptide: Tyrosine--tRNA ligase, mitochondrial (472 aa).

Y72 contributes to the L-tyrosine binding site. Position 76 (D76) interacts with ATP. The 'HIGH' region motif lies at 77 to 86; that stretch reads PTGDSLHVGH. The L-tyrosine site is built by D116, Y216, Q220, D223, and Q242. I269 and K279 together coordinate ATP. The 'KMSKS' region signature appears at 276-280; it reads KLGKS. Residues K350 and K362 each carry the N6-acetyllysine modification.

Belongs to the class-I aminoacyl-tRNA synthetase family. Homodimer.

It is found in the mitochondrion matrix. It carries out the reaction tRNA(Tyr) + L-tyrosine + ATP = L-tyrosyl-tRNA(Tyr) + AMP + diphosphate + H(+). Catalyzes the attachment of tyrosine to tRNA(Tyr) in a two-step reaction: tyrosine is first activated by ATP to form Tyr-AMP and then transferred to the acceptor end of tRNA(Tyr). The chain is Tyrosine--tRNA ligase, mitochondrial (Yars2) from Mus musculus (Mouse).